Consider the following 401-residue polypeptide: Canavanine gamma-lyase (401 aa).

N6-(pyridoxal phosphate)lysine is present on Lys-214.

The protein belongs to the trans-sulfuration enzymes family. Pyridoxal 5'-phosphate serves as cofactor.

It catalyses the reaction L-canavanine + H2O = N-hydroxyguanidine + L-homoserine. Functionally, lyase involved in the degradation of canavanine, the delta-oxa-analog of arginine, allowing growth on canavanine as sole nitrogen and carbon source. Catalyzes the elimination of hydroxyguanidine from canavanine with a subsequent water addition to yield homoserine. This Rhizobium leguminosarum bv. trifolii (strain WSM2304) protein is Canavanine gamma-lyase.